We begin with the raw amino-acid sequence, 1061 residues long: NACHT, LRR and PYD domains-containing protein 12 (1061 aa).

The region spanning 1 to 95 (MLRTAGRDGL…WERGQREDLV (95 aa)) is the Pyrin domain. One can recognise an FISNA domain in the interval 129-201 (YRDYVRRKFR…SPIKIETLFE (73 aa)). Residues 211–528 (RTVVMQGAAG…EFFAAMYYIL (318 aa)) enclose the NACHT domain. 217–224 (GAAGIGKS) is a binding site for ATP. 8 LRR repeats span residues 828–848 (HLVELDLTGNALEDLGLRLLC), 857–878 (RLRTLWLKICRLTAAACDELAS), 885–906 (SLRELDLSLNELGDLGVLLLCE), 914–935 (KLQTLRLGICRLGSAACEGLSV), 942–962 (NLRELDLSFNDLGDWGLWLLA), 971–992 (RLQKLWLDSCGLTAKACENLYF), 999–1020 (TLTDLYLTNNALGDTGVRLLCK), and 1028–1049 (KLRVLWLFGMDLNKMTHSRLAA).

The protein belongs to the NLRP family. In terms of assembly, interacts (via pyrin domain) with ASC. Interacts (via pyrin domain) with FAF1 (via UBA domain). Interacts with MAP3K14; this interaction promotes proteasomal degradation of MAP3K14. Interacts with NOD2; this interaction promotes degradation of NOD2 through the ubiquitin-proteasome pathway. Interacts with HSPA1A and HSPA8. Interacts with HSP90AA1. Interacts with TRIM25; this interaction inhibits RIGI-mediated signaling pathway. In terms of tissue distribution, detected only in peripheral blood leukocytes, predominantly in eosinophils and granulocytes, and at lower levels in monocytes.

It localises to the cytoplasm. In terms of biological role, plays an essential role as an potent mitigator of inflammation. Primarily expressed in dendritic cells and macrophages, inhibits both canonical and non-canonical NF-kappa-B and ERK activation pathways. Functions as a negative regulator of NOD2 by targeting it to degradation via the proteasome pathway. In turn, promotes bacterial tolerance. Also inhibits the RIGI-mediated immune signaling against RNA viruses by reducing the E3 ubiquitin ligase TRIM25-mediated 'Lys-63'-linked RIGI activation but enhancing the E3 ubiquitin ligase RNF125-mediated 'Lys-48'-linked RIGI degradation. Also acts as a negative regulator of inflammatory response to mitigate obesity and obesity-associated diseases in adipose tissue. In Homo sapiens (Human), this protein is NACHT, LRR and PYD domains-containing protein 12 (NLRP12).